The primary structure comprises 511 residues: Serine/threonine-protein kinase Nek3 (511 aa).

Residue methionine 1 is modified to N-acetylmethionine. Residues 1-282 are interaction with VAV2; that stretch reads MDNYTVLRVI…EQILDEIKIS (282 aa). The Protein kinase domain maps to 4–255; sequence YTVLRVIGQG…ATTLLCRGSL (252 aa). ATP-binding positions include 10–18 and lysine 33; that span reads IGQGSFGRA. The active-site Proton acceptor is aspartate 125. Threonine 159 is subject to Phosphothreonine; by autocatalysis. Disordered regions lie at residues 299 to 370 and 443 to 511; these read LGEA…GPSS and GPLS…GERA. The segment covering 309–321 has biased composition (basic and acidic residues); it reads EEERGRKCSHTEL. Acidic residues predominate over residues 472-485; it reads LDEEDTDFEEDNEN. Threonine 477 is subject to Phosphothreonine. The segment covering 498–511 has biased composition (gly residues); the sequence is YGDGPGGQLLGERA.

The protein belongs to the protein kinase superfamily. NEK Ser/Thr protein kinase family. NIMA subfamily. In terms of assembly, interacts with PXN, PRLR, VAV1 and VAV2 and this interaction is prolactin-dependent. It depends on Mg(2+) as a cofactor. In terms of processing, phosphorylation at Thr-477 regulates its catalytic activity. Brain.

The protein resides in the cytoplasm. The protein localises to the cell projection. It localises to the axon. The catalysed reaction is L-seryl-[protein] + ATP = O-phospho-L-seryl-[protein] + ADP + H(+). It carries out the reaction L-threonyl-[protein] + ATP = O-phospho-L-threonyl-[protein] + ADP + H(+). Protein kinase which influences neuronal morphogenesis and polarity through effects on microtubules. Regulates microtubule acetylation in neurons. Contributes to prolactin-mediated phosphorylation of PXN and VAV2. The chain is Serine/threonine-protein kinase Nek3 (Nek3) from Mus musculus (Mouse).